The sequence spans 240 residues: Proteasome subunit alpha (240 aa).

This sequence belongs to the peptidase T1A family. The 20S proteasome core is composed of 14 alpha and 14 beta subunits that assemble into four stacked heptameric rings, resulting in a barrel-shaped structure. The two inner rings, each composed of seven catalytic beta subunits, are sandwiched by two outer rings, each composed of seven alpha subunits. The catalytic chamber with the active sites is on the inside of the barrel. Has a gated structure, the ends of the cylinder being occluded by the N-termini of the alpha-subunits. Is capped at one or both ends by the proteasome regulatory ATPase, PAN.

It is found in the cytoplasm. With respect to regulation, the formation of the proteasomal ATPase PAN-20S proteasome complex, via the docking of the C-termini of PAN into the intersubunit pockets in the alpha-rings, triggers opening of the gate for substrate entry. Interconversion between the open-gate and close-gate conformations leads to a dynamic regulation of the 20S proteasome proteolysis activity. Its function is as follows. Component of the proteasome core, a large protease complex with broad specificity involved in protein degradation. This Methanoregula boonei (strain DSM 21154 / JCM 14090 / 6A8) protein is Proteasome subunit alpha.